Reading from the N-terminus, the 1327-residue chain is Polarized growth protein L1 (1327 aa).

The N-terminal stretch at 1-30 is a signal peptide; that stretch reads MRESFASLLATGAGKLALSLLFAATPFTSA. Topologically, residues 31–1169 are extracellular; sequence YTFNQVPSPN…FSQQNGKHLA (1139 aa). 17 N-linked (GlcNAc...) asparagine glycosylation sites follow: Asn-74, Asn-90, Asn-105, Asn-115, Asn-132, Asn-170, Asn-217, Asn-224, Asn-235, Asn-318, Asn-342, Asn-452, Asn-475, Asn-601, Asn-639, Asn-648, and Asn-691. A Kelch 1 repeat occupies 595–641; the sequence is NLYVAGNFSNNDGRNNIFSFKQGASDPTALPNRGLNRQVMTLYQNDS. A Kelch 2 repeat occupies 699 to 754; that stretch reads QVLAVSGFFDSVNEFNGNPSTNVQDFAVWVPSRSNWLHNLDFFTLAMSGRLMTFAD. N-linked (GlcNAc...) asparagine glycosylation is found at Asn-835, Asn-852, Asn-877, and Asn-931. Kelch repeat units follow at residues 945–993 and 994–1040; these read DVFV…ISDT and QMYI…TIAN. 3 N-linked (GlcNAc...) asparagine glycosylation sites follow: Asn-1000, Asn-1006, and Asn-1126. A helical membrane pass occupies residues 1170 to 1190; it reads LWAIVLIGLAIALVLTFLLVV. Topologically, residues 1191 to 1327 are cytoplasmic; the sequence is AGILLEWYRN…VFDTILACSS (137 aa).

The protein belongs to the RAX2 family.

Its subcellular location is the cell membrane. In terms of biological role, has been identified within the cluster that mediates the biosynthesis of squalestatin, but as its expression does not follow that of the other cluster members and it is not conserved in close related clusters, L1 seems not to be involved in the biosynthesis of squalestatin. Probably plays a role as a cell polarity regulator. The sequence is that of Polarized growth protein L1 from Phoma sp. (strain ATCC 20986 / MF5453).